We begin with the raw amino-acid sequence, 184 residues long: Non-specific lipid transfer protein GPI-anchored 6 (184 aa).

The first 24 residues, 1-24 (MEKSTRTLFITIVITSMLLGFGNS), serve as a signal peptide directing secretion. 4 cysteine pairs are disulfide-bonded: Cys-33-Cys-74, Cys-43-Cys-58, Cys-59-Cys-101, and Cys-72-Cys-111. The tract at residues 138–158 (NSTSPTQIHKDGTGGGKAEPV) is disordered. Ser-160 carries GPI-anchor amidated serine lipidation. The propeptide at 161 to 184 (NGWKEKSWLGVELLIYLLVSLIFF) is removed in mature form.

Belongs to the plant LTP family. As to expression, preferentially expressed in the shoot apical meristem and the root meristem. Also present in the ovules and developing embryos. Observed in cotyledons, hypocotyls, flowers, leaves and siliques. Up-regulated in the epidermis of stems.

It localises to the cell membrane. Its function is as follows. Lipid transfer protein involved in seed and ovule maturation and development, probably by regulating the fatty acids homeostasis during suberin and sporopollenin biosynthesis or deposition. Contributes to pre-invasive defense against some non-host powdery mildew pathogens by preventing the penetration of the epidermal cell wall by the fungal agents (e.g. Blumeria graminis f. sp. hordei (Bgh)). The chain is Non-specific lipid transfer protein GPI-anchored 6 from Arabidopsis thaliana (Mouse-ear cress).